Reading from the N-terminus, the 140-residue chain is Probable glycine cleavage system H protein (140 aa).

Residues 22–114 (RAIIGITSYA…YEEGWIVVLE (93 aa)) form the Lipoyl-binding domain. Position 63 is an N6-lipoyllysine (lysine 63).

It belongs to the GcvH family. In terms of assembly, the glycine cleavage system is composed of four proteins: P, T, L and H. It depends on (R)-lipoate as a cofactor.

Its function is as follows. The glycine cleavage system catalyzes the degradation of glycine. The H protein shuttles the methylamine group of glycine from the P protein to the T protein. This chain is Probable glycine cleavage system H protein, found in Korarchaeum cryptofilum (strain OPF8).